A 125-amino-acid chain; its full sequence is Large ribosomal subunit protein bL12 (125 aa).

This sequence belongs to the bacterial ribosomal protein bL12 family. As to quaternary structure, homodimer. Part of the ribosomal stalk of the 50S ribosomal subunit. Forms a multimeric L10(L12)X complex, where L10 forms an elongated spine to which 2 to 4 L12 dimers bind in a sequential fashion. Binds GTP-bound translation factors.

Forms part of the ribosomal stalk which helps the ribosome interact with GTP-bound translation factors. Is thus essential for accurate translation. In Mannheimia succiniciproducens (strain KCTC 0769BP / MBEL55E), this protein is Large ribosomal subunit protein bL12.